We begin with the raw amino-acid sequence, 378 residues long: Acetylornithine deacetylase (378 aa).

Histidine 76 is a binding site for Zn(2+). Aspartate 78 is a catalytic residue. Aspartate 108 contacts Zn(2+). Glutamate 140 is a catalytic residue. Residues glutamate 141, glutamate 165, and histidine 351 each coordinate Zn(2+).

The protein belongs to the peptidase M20A family. ArgE subfamily. As to quaternary structure, homodimer. The cofactor is Zn(2+). Co(2+) serves as cofactor. Requires glutathione as cofactor.

It localises to the cytoplasm. The catalysed reaction is N(2)-acetyl-L-ornithine + H2O = L-ornithine + acetate. Its pathway is amino-acid biosynthesis; L-arginine biosynthesis; L-ornithine from N(2)-acetyl-L-ornithine (linear): step 1/1. Its function is as follows. Catalyzes the hydrolysis of the amide bond of N(2)-acetylated L-amino acids. Cleaves the acetyl group from N-acetyl-L-ornithine to form L-ornithine, an intermediate in L-arginine biosynthesis pathway, and a branchpoint in the synthesis of polyamines. In Aliivibrio fischeri (strain MJ11) (Vibrio fischeri), this protein is Acetylornithine deacetylase.